The chain runs to 95 residues: Small ribosomal subunit protein uS19 (95 aa).

Belongs to the universal ribosomal protein uS19 family.

In terms of biological role, protein S19 forms a complex with S13 that binds strongly to the 16S ribosomal RNA. The chain is Small ribosomal subunit protein uS19 from Thermosipho melanesiensis (strain DSM 12029 / CIP 104789 / BI429).